Reading from the N-terminus, the 409-residue chain is Nucleoprotein (409 aa).

Disordered stretches follow at residues 1–32, 46–69, 120–193, and 238–259; these read MASG…SSGN, SPPL…QQHG, GADT…SGAE, and VDQV…DKMN. A compositionally biased stretch (low complexity) spans 15 to 31; sequence PVIKLGGPKPPKVGSSG. The segment at 29 to 160 is RNA-binding; it reads SSGNASWFQA…GNFRWDFIPL (132 aa). Residues 31-156 enclose the CoV N NTD domain; sequence GNASWFQAIK…GGPDGNFRWD (126 aa). The segment covering 162–179 has biased composition (low complexity); the sequence is RGRSGKSTAASSAASSRA. Basic and acidic residues-rich tracts occupy residues 180 to 192 and 247 to 259; these read PSRE…RSGA and KGKE…DKMN. Ser-190 is subject to Phosphoserine; by host. Positions 215 to 331 constitute a CoV N CTD domain; the sequence is TKAKADEMAH…QCVDGVGTRP (117 aa). The tract at residues 226 to 333 is dimerization; sequence RYCKRTIPPG…VDGVGTRPKD (108 aa). An intrachain disulfide couples Cys-320 to Cys-323. The interval 327–409 is disordered; sequence VGTRPKDDEP…GDSALGENEL (83 aa). A compositionally biased stretch (low complexity) spans 341–354; sequence RSSSRPATRTSSPA. Residues 358–367 show a composition bias toward basic residues; the sequence is PRPKKEKKTK. A compositionally biased stretch (basic and acidic residues) spans 368–384; that stretch reads KQDDEVDKALTSDEERN. Thr-378 carries the post-translational modification Phosphothreonine; by host. Ser-379 is modified (phosphoserine; by host).

This sequence belongs to the gammacoronavirus nucleocapsid protein family. In terms of assembly, homooligomer. Both monomeric and oligomeric forms interact with RNA. Interacts with protein M. Interacts with NSP3; this interaction serves to tether the genome to the newly translated replicase-transcriptase complex at a very early stage of infection. ADP-ribosylated. The ADP-ribosylation is retained in the virion during infection. Post-translationally, phosphorylated on serine and threonine residues.

The protein localises to the virion. The protein resides in the host endoplasmic reticulum-Golgi intermediate compartment. It localises to the host Golgi apparatus. In terms of biological role, packages the positive strand viral genome RNA into a helical ribonucleocapsid (RNP) and plays a fundamental role during virion assembly through its interactions with the viral genome and membrane protein M. Plays an important role in enhancing the efficiency of subgenomic viral RNA transcription as well as viral replication. The protein is Nucleoprotein of Gallus gallus (Chicken).